A 156-amino-acid chain; its full sequence is Large ribosomal subunit protein uL22 (156 aa).

Residues V114–S156 are disordered. Over residues G127 to A146 the composition is skewed to low complexity. Over residues K147 to S156 the composition is skewed to basic and acidic residues.

The protein belongs to the universal ribosomal protein uL22 family. Part of the 50S ribosomal subunit.

In terms of biological role, this protein binds specifically to 23S rRNA; its binding is stimulated by other ribosomal proteins, e.g. L4, L17, and L20. It is important during the early stages of 50S assembly. It makes multiple contacts with different domains of the 23S rRNA in the assembled 50S subunit and ribosome. Functionally, the globular domain of the protein is located near the polypeptide exit tunnel on the outside of the subunit, while an extended beta-hairpin is found that lines the wall of the exit tunnel in the center of the 70S ribosome. The chain is Large ribosomal subunit protein uL22 from Mycobacteroides abscessus (strain ATCC 19977 / DSM 44196 / CCUG 20993 / CIP 104536 / JCM 13569 / NCTC 13031 / TMC 1543 / L948) (Mycobacterium abscessus).